The sequence spans 79 residues: MGGFTSIWHWVIVLLVIVLLFGAKKIPELAKGLGSGIKNFKKAVKDDEEEAKNEPKTLDAQATQTKVHESSEIKSKQES.

The chain crosses the membrane as a helical span at residues 1-21; sequence MGGFTSIWHWVIVLLVIVLLF. The disordered stretch occupies residues 48–79; the sequence is EEEAKNEPKTLDAQATQTKVHESSEIKSKQES. Residues 66–79 show a composition bias toward basic and acidic residues; the sequence is KVHESSEIKSKQES.

It belongs to the TatA/E family. As to quaternary structure, the Tat system comprises two distinct complexes: a TatABC complex, containing multiple copies of TatA, TatB and TatC subunits, and a separate TatA complex, containing only TatA subunits. Substrates initially bind to the TatABC complex, which probably triggers association of the separate TatA complex to form the active translocon.

The protein resides in the cell inner membrane. In terms of biological role, part of the twin-arginine translocation (Tat) system that transports large folded proteins containing a characteristic twin-arginine motif in their signal peptide across membranes. TatA could form the protein-conducting channel of the Tat system. This is Sec-independent protein translocase protein TatA from Helicobacter pylori (strain ATCC 700392 / 26695) (Campylobacter pylori).